Consider the following 349-residue polypeptide: Probable formaldehyde dehydrogenase AdhA (349 aa).

The Zn(2+) site is built by cysteine 44, histidine 66, cysteine 97, cysteine 100, cysteine 103, cysteine 111, and cysteine 161.

Belongs to the zinc-containing alcohol dehydrogenase family. The cofactor is Zn(2+).

In terms of biological role, functions in the protection against aldehyde-stress. The protein is Probable formaldehyde dehydrogenase AdhA (adhA) of Bacillus subtilis (strain 168).